We begin with the raw amino-acid sequence, 205 residues long: MESRKIKVMATAIALIMVAMVVDAAGADKGKDKEECTAQLVGMATCLPYVQGKAKSPTPDCCSGLKQVINSDMKCLCMIIQERNDPDLGLQVNVSLALALPSVCHATADITKCPALLHLDPNSPDAQVFYQLAKGLNETVSASAPTGSASEPTSMSSTPGSSAGNNSGRTTSVPGTNHAQSFSKQWLGLEVVAHFFVIFYIFILV.

Residues 1 to 24 form the signal peptide; it reads MESRKIKVMATAIALIMVAMVVDA. Disulfide bonds link Cys-36–Cys-77, Cys-46–Cys-61, Cys-62–Cys-104, and Cys-75–Cys-113. 3 N-linked (GlcNAc...) asparagine glycosylation sites follow: Asn-93, Asn-137, and Asn-165. Residues 141–176 form a disordered region; sequence SASAPTGSASEPTSMSSTPGSSAGNNSGRTTSVPGT. The GPI-anchor amidated asparagine moiety is linked to residue Asn-177. Positions 178–205 are cleaved as a propeptide — removed in mature form; it reads HAQSFSKQWLGLEVVAHFFVIFYIFILV.

This sequence belongs to the plant LTP family. Expressed preferentially in expanding leaves and sepals, restricted to the distal side. Expressed at low levels in roots and stems.

It localises to the cell membrane. Functionally, probable lipid transfer protein. This is Non-specific lipid transfer protein GPI-anchored 13 from Arabidopsis thaliana (Mouse-ear cress).